Consider the following 450-residue polypeptide: Na(+)/H(+) antiporter NhaA (450 aa).

11 consecutive transmembrane segments (helical) span residues 24–44, 75–95, 111–131, 140–160, 169–189, 196–216, 224–244, 318–338, 352–372, 390–410, and 422–442; these read FFAI…LALV, LILW…GLEI, ALPI…YLAL, GWGV…SLLG, VFLT…IAFF, FSFL…NWLG, LLVG…ATIA, WVAW…TVSA, IFFG…WLLV, GIGW…TLAF, and SILC…RVLL.

The protein belongs to the NhaA Na(+)/H(+) (TC 2.A.33) antiporter family.

It localises to the cell inner membrane. The enzyme catalyses Na(+)(in) + 2 H(+)(out) = Na(+)(out) + 2 H(+)(in). Its function is as follows. Na(+)/H(+) antiporter that extrudes sodium in exchange for external protons. This Oleidesulfovibrio alaskensis (strain ATCC BAA-1058 / DSM 17464 / G20) (Desulfovibrio alaskensis) protein is Na(+)/H(+) antiporter NhaA.